The sequence spans 480 residues: Putative auxin transporter-like protein 4 (480 aa).

At 1–66 (MASEKVETIV…DAWFSCASNQ (66 aa)) the chain is on the cytoplasmic side. The chain crosses the membrane as a helical span at residues 67–84 (VAQVLLTLPYSFSQLGMA). At 85 to 86 (SG) the chain is on the extracellular side. A helical membrane pass occupies residues 87–107 (VAFQVFYGLMGSWTAYLISVL). At 108-143 (YVEYRTRRERDKVDFRNHVIQWFEVLDGLLGRHWRN) the chain is on the cytoplasmic side. Residues 144 to 164 (AGLLFNCTFLLFGSVIQLIAC) traverse the membrane as a helical segment. The Extracellular portion of the chain corresponds to 165–179 (ASNIYYINDRLDKRT). Residues 180 to 200 (WTYIFGACCATTVFVPSFHNY) form a helical membrane-spanning segment. The Cytoplasmic segment spans residues 201–203 (RVW). The chain crosses the membrane as a helical span at residues 204-224 (SFLGLLMTSYTAWYLTVAAVV). At 225–241 (HGKVDGAAPRAGPSKTM) the chain is on the extracellular side. A helical membrane pass occupies residues 242–262 (VLYFTGATNILYTFGGHAVTV). Topologically, residues 263 to 275 (EIMHAMWRPRRFK) are cytoplasmic. Residues 276–296 (MIYLAATAYVLTLTLPSAAAM) form a helical membrane-spanning segment. The Extracellular portion of the chain corresponds to 297-323 (YWAFGDALLDHSNAFALLPRTPWRDAA). A helical membrane pass occupies residues 324 to 344 (VVLMLIHQFITFGFACTPLYF). Over 345–365 (VWEKAIGVHGGAGVLRRAAAR) the chain is Cytoplasmic. The helical transmembrane segment at 366-386 (LPVVLPIWFLAVIFPFFGPIN) threads the bilayer. A topological domain (extracellular) is located at residue S387. Residues 388 to 408 (TVGSFLVSFTVYIIPAMAHMA) traverse the membrane as a helical segment. At 409–433 (TFAPAAARENAVEPPPRALGGWPGT) the chain is on the cytoplasmic side. A helical membrane pass occupies residues 434–454 (FAANCFVVAWVLVVGFGFGGW). The Extracellular segment spans residues 455 to 480 (ASTVNFVRQVDTFGLFTKCYQCPPRH).

It belongs to the amino acid/polyamine transporter 2 family. Amino acid/auxin permease (AAAP) (TC 2.A.18.1) subfamily.

Its subcellular location is the cell membrane. In terms of biological role, carrier protein involved in proton-driven auxin influx. May mediate the formation of auxin gradient from developing leaves (site of auxin biosynthesis) to tips. The polypeptide is Putative auxin transporter-like protein 4 (Oryza sativa subsp. japonica (Rice)).